Reading from the N-terminus, the 498-residue chain is MTYLLAIDQGTTSSRAMLFREDLSVAAQAQQEVPQHFPASGWVEHDPEDIWATTLATCRAAMEKGGVTAREIAAIGISNQRETTVVWERASGKAIHRAIVWQDRRTADVCARLQADGHEPLIATRTGLIADPYFSGTKIAWILDAVPGARARAERGELLFGTVDCYLLWRLTGGAVHATDATNASRTLLFDIYAGAWDDDLLRLLRVPRAMLPRVRDCAAEFGTTLPDLLGGPIAVRGIAGDQQAATVGQACFAPGMMKSTYGTGCFALLNTGATAVASKNKLLTTIAYQLNGVRTYALEGSIFVAGSAVQWLRDGLHLIKTAHDSDDLAPLADATQAVYLVPAFVGLGAPYWNPRVRGALFGLTRNTGPAEFAQAALESVCYQTHDLWTAMRADWPDGVTQNAALRVDGGMAVSDWTMQRLADILNVTVDRPVIPETTALGAAYLAGLASGICPPPAEFAARWQLDRRFTPEMDEETRARKLTGWTRAVKGLLASED.

T11 lines the ADP pocket. Residues T11, T12, and S13 each coordinate ATP. T11 contributes to the sn-glycerol 3-phosphate binding site. R15 contacts ADP. The sn-glycerol 3-phosphate site is built by R81, E82, Y133, and D242. The glycerol site is built by R81, E82, Y133, D242, and Q243. T264 and G307 together coordinate ADP. ATP is bound by residues T264, G307, Q311, and G411. Residue G411 coordinates ADP.

The protein belongs to the FGGY kinase family.

The enzyme catalyses glycerol + ATP = sn-glycerol 3-phosphate + ADP + H(+). It participates in polyol metabolism; glycerol degradation via glycerol kinase pathway; sn-glycerol 3-phosphate from glycerol: step 1/1. Inhibited by fructose 1,6-bisphosphate (FBP). Its function is as follows. Key enzyme in the regulation of glycerol uptake and metabolism. Catalyzes the phosphorylation of glycerol to yield sn-glycerol 3-phosphate. The polypeptide is Glycerol kinase (Afipia carboxidovorans (strain ATCC 49405 / DSM 1227 / KCTC 32145 / OM5) (Oligotropha carboxidovorans)).